Consider the following 138-residue polypeptide: Large ribosomal subunit protein uL16 (138 aa).

Over residues 1–16 the composition is skewed to basic residues; the sequence is MLIPRRVKHRKQHHPG. A disordered region spans residues 1-25; that stretch reads MLIPRRVKHRKQHHPGRSGQATGGT.

This sequence belongs to the universal ribosomal protein uL16 family. As to quaternary structure, part of the 50S ribosomal subunit.

Its function is as follows. Binds 23S rRNA and is also seen to make contacts with the A and possibly P site tRNAs. The chain is Large ribosomal subunit protein uL16 from Renibacterium salmoninarum (strain ATCC 33209 / DSM 20767 / JCM 11484 / NBRC 15589 / NCIMB 2235).